Consider the following 111-residue polypeptide: 2Fe-2S ferredoxin (111 aa).

The 103-residue stretch at 5-107 (IKVTFVINNG…GIKVRLPSAT (103 aa)) folds into the 2Fe-2S ferredoxin-type domain. Residues C42, C48, C51, and C88 each coordinate [2Fe-2S] cluster.

Belongs to the adrenodoxin/putidaredoxin family. [2Fe-2S] cluster serves as cofactor.

Ferredoxin are iron-sulfur proteins that transfer electrons in a wide variety of metabolic reactions. The polypeptide is 2Fe-2S ferredoxin (fdxB) (Rickettsia bellii (strain RML369-C)).